The chain runs to 105 residues: Insulin (105 aa).

A signal peptide spans 1-24; that stretch reads MALWTRLVPLLALLALWAPAPAHA. 3 cysteine pairs are disulfide-bonded: Cys31/Cys91, Cys43/Cys104, and Cys90/Cys95. A propeptide spans 57-82 (c peptide); it reads EVEGPQVGALELAGGPGAGGLEGPPQ.

Belongs to the insulin family. As to quaternary structure, heterodimer of a B chain and an A chain linked by two disulfide bonds.

The protein resides in the secreted. Its function is as follows. Insulin decreases blood glucose concentration. It increases cell permeability to monosaccharides, amino acids and fatty acids. It accelerates glycolysis, the pentose phosphate cycle, and glycogen synthesis in liver. This chain is Insulin (INS), found in Ovis aries (Sheep).